A 632-amino-acid chain; its full sequence is Phospholipid:diacylglycerol acyltransferase (632 aa).

A compositionally biased stretch (basic residues) spans 1 to 15 (MASSKKSKTHKKKKE). The interval 1–47 (MASSKKSKTHKKKKEVKSPIDLPNSKKPTRALSEQPSASETQSVSNK) is disordered. The Cytoplasmic portion of the chain corresponds to 1–56 (MASSKKSKTHKKKKEVKSPIDLPNSKKPTRALSEQPSASETQSVSNKSRKSKFGKR). A compositionally biased stretch (polar residues) spans 32–46 (LSEQPSASETQSVSN). Residues 57–77 (LNFILGAILGICGAFFFAVGD) traverse the membrane as a helical segment. The Lumenal portion of the chain corresponds to 78 to 632 (DNAVFDPATL…NEINLDKPRN (555 aa)). A substrate-binding site is contributed by Asp-136. Ser-293 serves as the catalytic Acyl-ester intermediate. Met-294 is a substrate binding site. Active-site charge relay system residues include Asp-535 and His-586.

Belongs to the AB hydrolase superfamily. Lipase family.

Its subcellular location is the endoplasmic reticulum membrane. It carries out the reaction a glycerophospholipid + a 1,2-diacyl-sn-glycerol = a monoacylglycerophospholipid + a triacyl-sn-glycerol. The protein operates within glycerolipid metabolism; triacylglycerol biosynthesis. Functionally, catalyzes triacylglycerol (TAG) formation by an acyl-CoA independent pathway. The enzyme specifically transfers acyl groups from the sn-2 position of a phospholipid to diacylglycerol (DAG), thus forming an sn-1-lysophospholipid. Plays a major role in triacylglycerol formation at log phase. Involved in lipid particle synthesis from the endoplasmic reticulum, promoting localized TAG production at discrete ER subdomains. The sequence is that of Phospholipid:diacylglycerol acyltransferase (plh1) from Schizosaccharomyces pombe (strain 972 / ATCC 24843) (Fission yeast).